The primary structure comprises 103 residues: Alpha-ketoglutarate dehydrogenase component 4 (103 aa).

Met1 is subject to N-acetylmethionine. At Lys5 the chain carries N6-succinyllysine. The tract at residues 23–70 (IRFPDRRDNPKPNVSEVLRSAGLPSHTSSISQHSKGSKSPDWLMHQGP) is disordered. Positions 47–61 (SHTSSISQHSKGSKS) are enriched in low complexity. Residues Ser61 and Ser90 each carry the phosphoserine modification.

Belongs to the alpha-ketoglutarate dehydrogenase component 4 family. As to quaternary structure, component of the 2-oxoglutarate dehydrogenase complex (OGDHC), composed of OGDH (2-oxoglutarate dehydrogenase; also called E1 subunit), DLST (dihydrolipoamide succinyltransferase; also called E2 subunit) and DLD (dihydrolipoamide dehydrogenase; also called E3 subunit), and the assembly factor KGD4. Within OGDHC complex, interacts (via N-terminus) with E3 subunit and (via C-terminus) with E2 subunit.

Its subcellular location is the mitochondrion. In terms of biological role, molecular adapter that is necessary to form a stable 2-oxoglutarate dehydrogenase enzyme complex (OGDHC). Enables the specific recruitment of E3 subunit to E2 subunit in the 2-oxoglutarate dehydrogenase complex (OGDHC). The sequence is that of Alpha-ketoglutarate dehydrogenase component 4 (KGD4) from Bos taurus (Bovine).